The sequence spans 422 residues: Probable D-serine dehydratase (422 aa).

K105 carries the post-translational modification N6-(pyridoxal phosphate)lysine.

This sequence belongs to the serine/threonine dehydratase family. DsdA subfamily. Pyridoxal 5'-phosphate serves as cofactor.

It catalyses the reaction D-serine = pyruvate + NH4(+). This chain is Probable D-serine dehydratase, found in Carboxydothermus hydrogenoformans (strain ATCC BAA-161 / DSM 6008 / Z-2901).